The chain runs to 239 residues: Ribonuclease PH (239 aa).

Residues arginine 86 and 124–126 (GTR) contribute to the phosphate site.

It belongs to the RNase PH family. As to quaternary structure, homohexameric ring arranged as a trimer of dimers.

The enzyme catalyses tRNA(n+1) + phosphate = tRNA(n) + a ribonucleoside 5'-diphosphate. Its function is as follows. Phosphorolytic 3'-5' exoribonuclease that plays an important role in tRNA 3'-end maturation. Removes nucleotide residues following the 3'-CCA terminus of tRNAs; can also add nucleotides to the ends of RNA molecules by using nucleoside diphosphates as substrates, but this may not be physiologically important. Probably plays a role in initiation of 16S rRNA degradation (leading to ribosome degradation) during starvation. The protein is Ribonuclease PH of Azoarcus sp. (strain BH72).